The following is a 226-amino-acid chain: MNQLPTWHDVIGEEKQQSYFVDTLNFVEAERAAGKAIYPPAKDVFNAFRFTEFNDVKVVILGQDPYHGPNQAHGLCFSVLPGIKTPPSLVNMYKELAQDIEGFQIPQHGFLQSWAEQGVLLLNTVLTVEQGKAHSHSKTGWETFTDRVIEAINQHQEGVVFLLWGSHAQKKGRFIDRNKHHVLTAPHPSPLSAHRGFFGSKPFSQANQILVQQGKEVINWHLPMTV.

The active-site Proton acceptor is the Asp-64.

The protein belongs to the uracil-DNA glycosylase (UDG) superfamily. UNG family.

Its subcellular location is the cytoplasm. The catalysed reaction is Hydrolyzes single-stranded DNA or mismatched double-stranded DNA and polynucleotides, releasing free uracil.. Functionally, excises uracil residues from the DNA which can arise as a result of misincorporation of dUMP residues by DNA polymerase or due to deamination of cytosine. The protein is Uracil-DNA glycosylase of Vibrio campbellii (strain ATCC BAA-1116).